The following is a 2161-amino-acid chain: DNA polymerase epsilon catalytic subunit A (2161 aa).

3 consecutive short sequence motifs (nuclear localization signal) follow at residues 5 to 12, 1137 to 1144, and 1239 to 1246; these read NRRRDRKD, HKKVREKD, and LKKRKWKV. Positions 2038, 2041, 2063, and 2068 each coordinate Zn(2+). The CysA-type zinc finger occupies 2038–2068; it reads CSNCDAYRDLDICRDPALLTEKEWSCADTQC. [4Fe-4S] cluster is bound by residues C2099, C2102, C2114, and C2116. Positions 2099–2116 match the CysB motif motif; it reads CIRCNQVKAAHLTEQCEC. The Nuclear localization signal 4 signature appears at 2130–2137; that stretch reads SKRMEIFM.

Belongs to the DNA polymerase type-B family. Heterotetramer. Subunit of the DNA polymerase II. Interacts (via C-terminus) with DPB2. Interacts with LHP1/TFL2. Requires [4Fe-4S] cluster as cofactor. Mostly expressed at low levels in inflorescence (floral meristem and flowers until anthesis), and, to a lower extent, in roots, seeds and leaves.

It localises to the nucleus. It carries out the reaction DNA(n) + a 2'-deoxyribonucleoside 5'-triphosphate = DNA(n+1) + diphosphate. DNA polymerase II, which participates in chromosomal DNA replication. Required for the timing and determination of cell fate during plant embryogenesis and root pole development, by promoting cell cycle and cell type patterning. Necessary for proper shoot (SAM) and root apical meristem (RAM) functions. Involved in maintaining epigenetic states, controlling hypersensitive response (HR), and mediating abscisic acid (ABA) signaling. Required for flowering repression through a mechanism involving epigenetic gene silencing. May participate in processes involved in chromatin-mediated cellular memory. This chain is DNA polymerase epsilon catalytic subunit A (POL2A), found in Arabidopsis thaliana (Mouse-ear cress).